The primary structure comprises 119 residues: Large ribosomal subunit protein bL20 (119 aa).

This sequence belongs to the bacterial ribosomal protein bL20 family.

Functionally, binds directly to 23S ribosomal RNA and is necessary for the in vitro assembly process of the 50S ribosomal subunit. It is not involved in the protein synthesizing functions of that subunit. The sequence is that of Large ribosomal subunit protein bL20 from Streptococcus suis (strain 98HAH33).